Consider the following 576-residue polypeptide: Calmodulin-binding protein 60 B (576 aa).

Residues 1–25 are disordered; it reads MMLPTKRPAPDHGDDERNEVMVPEP. Residues 1–80 form a calmodulin-binding region; sequence MMLPTKRPAP…HPSSRPSLNR (80 aa). Residues 8 to 25 are compositionally biased toward basic and acidic residues; the sequence is PAPDHGDDERNEVMVPEP. The DNA-binding stretch occupies residues 150 to 273; that stretch reads DERQDWTENE…AFHKRLAYKN (124 aa).

This sequence belongs to the plant ACBP60 protein family. As to quaternary structure, (Microbial infection) Interacts with V.dahliae SCP41. Interacts with calmodulin (CaM).

It is found in the nucleus. In terms of biological role, transcription activator that binds DNA in a sequence-specific manner, likely 5'-GAAATTTTGG-3', to promote the expression of target genes. Required for pathogen resistance. In Gossypium hirsutum (Upland cotton), this protein is Calmodulin-binding protein 60 B.